Here is a 121-residue protein sequence, read N- to C-terminus: Large ribosomal subunit protein bL19 (121 aa).

It belongs to the bacterial ribosomal protein bL19 family.

In terms of biological role, this protein is located at the 30S-50S ribosomal subunit interface and may play a role in the structure and function of the aminoacyl-tRNA binding site. This chain is Large ribosomal subunit protein bL19 (rplS), found in Borreliella burgdorferi (strain ATCC 35210 / DSM 4680 / CIP 102532 / B31) (Borrelia burgdorferi).